The sequence spans 134 residues: UPF0412 protein YaaI (134 aa).

A signal peptide spans 1–23; that stretch reads MKSVFTISASLAISLMLCCTAQA.

This sequence belongs to the UPF0412 family.

The protein is UPF0412 protein YaaI of Escherichia coli (strain ATCC 8739 / DSM 1576 / NBRC 3972 / NCIMB 8545 / WDCM 00012 / Crooks).